Reading from the N-terminus, the 69-residue chain is DNA gyrase inhibitor YacG (69 aa).

Zn(2+) contacts are provided by C7, C10, C26, and C30.

Belongs to the DNA gyrase inhibitor YacG family. Interacts with GyrB. Zn(2+) is required as a cofactor.

Its function is as follows. Inhibits all the catalytic activities of DNA gyrase by preventing its interaction with DNA. Acts by binding directly to the C-terminal domain of GyrB, which probably disrupts DNA binding by the gyrase. In Shewanella baltica (strain OS195), this protein is DNA gyrase inhibitor YacG.